The primary structure comprises 194 residues: Imidazoleglycerol-phosphate dehydratase (194 aa).

This sequence belongs to the imidazoleglycerol-phosphate dehydratase family.

It is found in the cytoplasm. The catalysed reaction is D-erythro-1-(imidazol-4-yl)glycerol 3-phosphate = 3-(imidazol-4-yl)-2-oxopropyl phosphate + H2O. Its pathway is amino-acid biosynthesis; L-histidine biosynthesis; L-histidine from 5-phospho-alpha-D-ribose 1-diphosphate: step 6/9. The protein is Imidazoleglycerol-phosphate dehydratase of Caldicellulosiruptor saccharolyticus (strain ATCC 43494 / DSM 8903 / Tp8T 6331).